We begin with the raw amino-acid sequence, 232 residues long: Ribose-5-phosphate isomerase A (232 aa).

Residues 34–37 (TGST), 89–92 (DGAD), and 102–105 (KGGG) contribute to the substrate site. Residue E111 is the Proton acceptor of the active site. Position 129 (K129) interacts with substrate.

Belongs to the ribose 5-phosphate isomerase family. As to quaternary structure, homodimer.

The enzyme catalyses aldehydo-D-ribose 5-phosphate = D-ribulose 5-phosphate. It participates in carbohydrate degradation; pentose phosphate pathway; D-ribose 5-phosphate from D-ribulose 5-phosphate (non-oxidative stage): step 1/1. In terms of biological role, catalyzes the reversible conversion of ribose-5-phosphate to ribulose 5-phosphate. This Protochlamydia amoebophila (strain UWE25) protein is Ribose-5-phosphate isomerase A.